Reading from the N-terminus, the 776-residue chain is Angiomotin-like protein 2 (776 aa).

The tract at residues 41-88 (GGAGAGGTGSPQASAEILAPEDTQVLQQATRQEPQGQEHQGGESHLAE) is disordered. Residues 101–307 (GEELPTYEEA…STQTSSAPSG (207 aa)) form a required for interaction with CDH5 region. The residue at position 107 (Tyr-107) is a Phosphotyrosine. Disordered stretches follow at residues 119-142 (AQQAGPRPHVGDRDPRGAPGGHRS), 169-215 (RNGA…QYPH), and 283-309 (GPLGALSPPEVEGPASTQTSSAPSGSA). The span at 177–192 (HMSSSHSFPQLARNQQ) shows a compositional bias: polar residues. Positions 196–213 (PRGPPAEGPEPRGPPPQY) are enriched in pro residues. The tract at residues 220–307 (HETATAVTDP…STQTSSAPSG (88 aa)) is required for interaction with CDH1. Positions 297-306 (ASTQTSSAPS) are enriched in polar residues. Coiled-coil stretches lie at residues 314 to 509 (METL…LELR) and 543 to 570 (ALRLSEQLREKEEQILALEADMTKWEQK). Glycyl lysine isopeptide (Lys-Gly) (interchain with G-Cter in ubiquitin) cross-links involve residues Lys-347 and Lys-408. Disordered stretches follow at residues 591–620 (QRDTTLIRHSPQPSPSSSFNEGLLTGGHRH) and 677–743 (TQGW…LDPD). Residues 678–687 (QGWQSLSSSE) are compositionally biased toward polar residues. Phosphoserine occurs at positions 756 and 759. A PDZ-binding motif is present at residues 773-776 (EILI).

The protein belongs to the angiomotin family. In terms of assembly, part of a complex composed of AMOTL2, MAGI1 and CDH5, within the complex AMOTL2 acts as a scaffold protein for the interaction of MAGI1 with CDH5. The complex is required for coupling actin fibers to cell junctions in endothelial cells. Within the complex AMOTL2 (via its N-terminus) interacts with CDH5. Interacts (via N-terminus) with MAGI1. Interacts (via N-terminus) with ACTB; the interaction facilitates binding of cell junction complexes to actin fibers in endothelial cells. Interacts with CDH1; the interaction may facilitate binding of radial actin fibers to cell junction complexes. Interacts with SRC. Interacts with YAP1; the interaction is required for ubiquitination of AMOTL2 and localization of YAP1 to tight junctions. Interacts with WWP1; the interaction facilitates WWP1 interaction with the Crumbs complex and subsequent WWP1 translocation to the plasma membrane. WPP1 interaction with the Crumbs complex promotes WPP1 monoubiquitination of AMOTL2 which subsequently activates the Hippo signaling pathway. When ubiquitinated interacts with LATS2 (via UBA domain); the interaction promotes LATS2 phosphorylation of YAP1. Interacts (via PPXY motif) with WWTR1/TAZ (via WW domain); the interaction promotes WWTR1/TAZ localization to the cytoplasm and thereby inhibition of its transcriptional properties. Interacts with PHLDB2; interaction may facilitate PHLDB2 localization to the myotube podosome cortex that surrounds the core. In terms of processing, monoubiquitinated at Lys-347 and Lys-408 by Crumbs complex-bound WWP1. De-ubiquitinated at Lys-347 and Lys-408 by USP9X; the interaction may be promoted by cell contact inhibition. Deubiquitination of AMOTL2 negatively regulates Hippo signaling activation. Post-translationally, phosphorylation at Tyr-107 is necessary for efficient binding to SRC and synergistically functioning with SRC to activate the downstream MAPK pathway.

The protein localises to the recycling endosome. The protein resides in the cytoplasm. Its subcellular location is the cell projection. It is found in the podosome. It localises to the cell junction. Functionally, regulates the translocation of phosphorylated SRC to peripheral cell-matrix adhesion sites. Required for proper architecture of actin filaments. Plays a role in coupling actin fibers to cell junctions in endothelial cells and is therefore required for correct endothelial cell morphology via facilitating transcellular transmission of mechanical force resulting in endothelial cell elongation. Required for the anchoring of radial actin fibers to CDH1 junction complexes at the cell membrane which facilitates organization of radial actin fiber structure and cellular response to contractile forces. This contributes to maintenance of cell area, size, shape, epithelial sheet organization and trophectoderm cell properties that facilitate blastocyst zona hatching. Inhibits the Wnt/beta-catenin signaling pathway, probably by recruiting CTNNB1 to recycling endosomes and hence preventing its translocation to the nucleus. Participates in angiogenesis. Activates the Hippo signaling pathway in response to cell contact inhibition via interaction with and ubiquitination by Crumbs complex-bound WWP1. Ubiquitinated AMOTL2 then interacts with LATS2 which in turn phosphorylates YAP1, excluding it from the nucleus and localizing it to the cytoplasm and tight junctions, therefore ultimately repressing YAP1-driven transcription of target genes. Acts to inhibit WWTR1/TAZ transcriptional coactivator activity via sequestering WWTR1/TAZ in the cytoplasm and at tight junctions. Regulates the size and protein composition of the podosome cortex and core at myofibril neuromuscular junctions. Selectively promotes FGF-induced MAPK activation through SRC. May play a role in the polarity, proliferation and migration of endothelial cells. The chain is Angiomotin-like protein 2 from Canis lupus familiaris (Dog).